Consider the following 149-residue polypeptide: Histone H2A (149 aa).

Over residues 1–23 the composition is skewed to basic residues; that stretch reads METAGKAKKGFGGRKGGPRKKSV. Disordered regions lie at residues 1 to 25 and 127 to 149; these read META…SVTR and KTAE…PKKA. Over residues 127 to 138 the composition is skewed to basic and acidic residues; sequence KTAEKAAKEPKS. 2 consecutive short sequence motifs (SPKK motif) follow at residues 138-141 and 145-148; these read SPSK and SPKK.

This sequence belongs to the histone H2A family. In terms of assembly, the nucleosome is a histone octamer containing two molecules each of H2A, H2B, H3 and H4 assembled in one H3-H4 heterotetramer and two H2A-H2B heterodimers. The octamer wraps approximately 147 bp of DNA.

The protein resides in the nucleus. Its subcellular location is the chromosome. Functionally, core component of nucleosome. Nucleosomes wrap and compact DNA into chromatin, limiting DNA accessibility to the cellular machineries which require DNA as a template. Histones thereby play a central role in transcription regulation, DNA repair, DNA replication and chromosomal stability. DNA accessibility is regulated via a complex set of post-translational modifications of histones, also called histone code, and nucleosome remodeling. The chain is Histone H2A from Petroselinum crispum (Parsley).